The following is a 691-amino-acid chain: Protein-glutamine gamma-glutamyltransferase E (691 aa).

Y110 carries the phosphotyrosine modification. Phosphothreonine is present on T111. Residues A221, N224, N226, and D227 each coordinate Ca(2+). C272 is an active-site residue. Residues D301, D303, N305, S307, and D324 each contribute to the Ca(2+) site. Active-site residues include H330 and D353. 4 residues coordinate Ca(2+): N393, T414, E442, and E447.

This sequence belongs to the transglutaminase superfamily. Transglutaminase family. As to quaternary structure, consists of two polypeptide chains, which are synthesized as a precursor form of a single polypeptide. Ca(2+) serves as cofactor. Post-translationally, activated by proteolytic processing. In vitro activation is commonly achieved by cleavage with dispase, a neutral bacterial protease. Physiological activation may be catalyzed by CTSL and, to a lesser extent, by CTSS.

The protein localises to the cytoplasm. The enzyme catalyses L-glutaminyl-[protein] + L-lysyl-[protein] = [protein]-L-lysyl-N(6)-5-L-glutamyl-[protein] + NH4(+). In terms of biological role, catalyzes the calcium-dependent formation of isopeptide cross-links between glutamine and lysine residues in various proteins, as well as the conjugation of polyamines to proteins. Involved in the formation of the cornified envelope (CE), a specialized component consisting of covalent cross-links of proteins beneath the plasma membrane of terminally differentiated keratinocytes. Catalyzes small proline-rich proteins and LOR cross-linking to form small interchain oligomers, which are further cross-linked by TGM1 onto the growing CE scaffold. In hair follicles, involved in cross-linking structural proteins to hardening the inner root sheath. The chain is Protein-glutamine gamma-glutamyltransferase E (TGM3) from Bos taurus (Bovine).